We begin with the raw amino-acid sequence, 748 residues long: Structure-specific endonuclease subunit SLX4 (748 aa).

Positions L50–E102 are disordered. Residues I57–T75 are compositionally biased toward polar residues. T72 is modified (phosphothreonine; by ATR and ATM). Residues T76–K88 show a composition bias toward basic and acidic residues. A Phosphothreonine; by ATR and ATM modification is found at T113. Disordered stretches follow at residues I215–K236 and E277–L303. Positions N222–K236 are enriched in basic and acidic residues. A compositionally biased stretch (low complexity) spans E277 to Q291. Position 289 is a phosphoserine; by ATR and ATM (S289). Phosphothreonine; by ATR and ATM is present on T319. Residues S329 and S355 each carry the phosphoserine; by ATR and ATM modification.

Belongs to the SLX4 family. As to quaternary structure, forms a heterodimer with SLX1. Interacts with RAD1; catalytic subunit of the RAD1-RAD10 endonuclease. Interacts with RTT107. Post-translationally, phosphorylated by ATR (MEC1) and ATM (TEL1) upon DNA damage. This appears to be required for the function with the RAD1-RAD10 endonuclease.

The protein localises to the nucleus. It localises to the cytoplasm. Its function is as follows. Regulatory subunit that interacts with and increases the activity of different structure-specific endonucleases. Has several distinct roles in protecting genome stability by resolving diverse forms of deleterious DNA structures. Component of the SLX1-SLX4 structure-specific endonuclease that resolves DNA secondary structures generated during DNA repair and recombination. Has endonuclease activity towards branched DNA substrates, introducing single-strand cuts in duplex DNA close to junctions with ss-DNA. Has a preference for simple Y, 5'-flap and replication fork-like structures. It cleaves the strand bearing the 5'-non-homologous arm at the branch site junction and generates ligatable, nicked products from the 5'-flap or replication fork substrates. Plays a critical role in maintaining the integrity of the ribosomal DNA (rDNA) loci, where it has a role in re-starting stalled replication forks. Has Holliday junction resolvase activity in vitro. Interacts with the structure-specific RAD1-RAD10 endonuclease and promotes RAD1-RAD10-dependent 3'-non-homologous tail removal (NHTR) during repair of double-strand breaks by single-strand annealing. SLX4 also promotes recovery from DNA-alkylation-induced replisome stalling during DNA replication by facilitating the error-free mode of lesion bypass. This does not require SLX1 or RAD1-RAD10, but probably RTT107. The protein is Structure-specific endonuclease subunit SLX4 of Saccharomyces cerevisiae (strain YJM789) (Baker's yeast).